The sequence spans 154 residues: Transcriptional repressor NrdR (154 aa).

A zinc finger spans residues 3 to 34; the sequence is CPFCRHPDSRVVDSRETDEGQAIRRRRSCPEC. An ATP-cone domain is found at 46–136; that stretch reads LAVVKRSGVT…VYRSFSSAED (91 aa).

It belongs to the NrdR family. Zn(2+) is required as a cofactor.

Its function is as follows. Negatively regulates transcription of bacterial ribonucleotide reductase nrd genes and operons by binding to NrdR-boxes. This is Transcriptional repressor NrdR from Mycolicibacterium vanbaalenii (strain DSM 7251 / JCM 13017 / BCRC 16820 / KCTC 9966 / NRRL B-24157 / PYR-1) (Mycobacterium vanbaalenii).